The chain runs to 263 residues: 3-methyl-2-oxobutanoate hydroxymethyltransferase (263 aa).

Residues Asp-45 and Asp-84 each coordinate Mg(2+). 3-methyl-2-oxobutanoate-binding positions include 45–46 (DS), Asp-84, and Lys-112. Glu-114 is a binding site for Mg(2+). Glu-181 functions as the Proton acceptor in the catalytic mechanism.

It belongs to the PanB family. As to quaternary structure, homodecamer; pentamer of dimers. Mg(2+) serves as cofactor.

It localises to the cytoplasm. It carries out the reaction 3-methyl-2-oxobutanoate + (6R)-5,10-methylene-5,6,7,8-tetrahydrofolate + H2O = 2-dehydropantoate + (6S)-5,6,7,8-tetrahydrofolate. Its pathway is cofactor biosynthesis; (R)-pantothenate biosynthesis; (R)-pantoate from 3-methyl-2-oxobutanoate: step 1/2. Functionally, catalyzes the reversible reaction in which hydroxymethyl group from 5,10-methylenetetrahydrofolate is transferred onto alpha-ketoisovalerate to form ketopantoate. The polypeptide is 3-methyl-2-oxobutanoate hydroxymethyltransferase (Chromohalobacter salexigens (strain ATCC BAA-138 / DSM 3043 / CIP 106854 / NCIMB 13768 / 1H11)).